The sequence spans 1512 residues: Lysophospholipase NTE1 (1512 aa).

Residues 1-48 (MAAPDAMTSLVKSSVALLSSAHESLPTSLAAMKTAETAPSSTFGILGR) are Cytoplasmic-facing. Residues 49 to 69 (VILSILSVLPTLLFWVSYTLP) form a helical membrane-spanning segment. Residues 70–83 (TWLFTLFSMSLTFT) lie on the Lumenal side of the membrane. A helical membrane pass occupies residues 84-104 (MNFTTLMLVLVFVVSTISYFV). The Cytoplasmic portion of the chain corresponds to 105–1512 (RYRYLTMYAR…RTMAPRRASI (1408 aa)). Disordered regions lie at residues 204–230 (NREE…QAHR), 262–362 (RHDE…AHPD), 534–556 (TQMS…QHDV), and 740–770 (TEDD…KRSR). A compositionally biased stretch (acidic residues) spans 208–217 (SDSDEDDGEL). Polar residues predominate over residues 268–291 (GPSSSTPMSPQHRPSMTRNSSFNM). Over residues 343–358 (HSKQRRSPSRSTKPKS) the composition is skewed to basic residues. Residues 537–549 (SRGTGRSGRSSFS) show a composition bias toward low complexity. A nucleoside 3',5'-cyclic phosphate is bound by residues 669–793 (LSAS…SNRS) and 830–950 (RLTT…IASR). Over residues 751 to 761 (PTATNTSLRNG) the composition is skewed to polar residues. In terms of domain architecture, PNPLA spans 1209–1373 (LVLGGGGARG…IDNLTVAHMK (165 aa)). The short motif at 1213-1218 (GGGARG) is the GXGXXG element. The short motif at 1240 to 1244 (GTSIG) is the GXSXG element. The Nucleophile role is filled by S1242. D1360 serves as the catalytic Proton acceptor. Residues 1360 to 1362 (DGG) carry the DGA/G motif.

The protein belongs to the NTE family.

It localises to the endoplasmic reticulum membrane. It carries out the reaction a 1-acyl-sn-glycero-3-phosphocholine + H2O = sn-glycerol 3-phosphocholine + a fatty acid + H(+). With respect to regulation, inhibited by organophosphorus esters. Intracellular phospholipase B that catalyzes the double deacylation of phosphatidylcholine (PC) to glycerophosphocholine (GroPCho). Plays an important role in membrane lipid homeostasis. Responsible for the rapid PC turnover in response to inositol, elevated temperatures, or when choline is present in the growth medium. This chain is Lysophospholipase NTE1 (NTE1), found in Phaeosphaeria nodorum (strain SN15 / ATCC MYA-4574 / FGSC 10173) (Glume blotch fungus).